The following is a 505-amino-acid chain: N-succinylglutamate 5-semialdehyde dehydrogenase (505 aa).

NAD(+) is bound at residue Gly-234–Gly-239. Catalysis depends on residues Glu-257 and Cys-291.

Belongs to the aldehyde dehydrogenase family. AstD subfamily.

It catalyses the reaction N-succinyl-L-glutamate 5-semialdehyde + NAD(+) + H2O = N-succinyl-L-glutamate + NADH + 2 H(+). It functions in the pathway amino-acid degradation; L-arginine degradation via AST pathway; L-glutamate and succinate from L-arginine: step 4/5. Functionally, catalyzes the NAD-dependent reduction of succinylglutamate semialdehyde into succinylglutamate. In Yersinia pseudotuberculosis serotype IB (strain PB1/+), this protein is N-succinylglutamate 5-semialdehyde dehydrogenase.